Here is a 24-residue protein sequence, read N- to C-terminus: Small ribosomal subunit protein uS19 (24 aa).

Positions K1–K24 are disordered. Positions Y11–K24 are enriched in basic residues.

This sequence belongs to the universal ribosomal protein uS19 family.

In terms of biological role, protein S19 forms a complex with S13 that binds strongly to the 16S ribosomal RNA. This chain is Small ribosomal subunit protein uS19, found in Phytoplasma sp. (strain STRAWB2).